We begin with the raw amino-acid sequence, 219 residues long: Transmembrane emp24 domain-containing protein 10 (219 aa).

The N-terminal stretch at 1–31 (MSGLSGPPARRGPFPLALLLLFLLGPRLVLA) is a signal peptide. The tract at residues 1-142 (MSGLSGPPAR…KNYEEIAKVE (142 aa)) is required for interaction with STX17. Over 32 to 185 (ISFHLPINSR…RDTNESTNTR (154 aa)) the chain is Lumenal. One can recognise a GOLD domain in the interval 41-193 (RKCLREEIHK…TRVLYFSIFS (153 aa)). The interval 147–178 (LEVELRRLEDLSESIVNDFAYMKKREEEMRDT) is required for TMED10 and TMED2 cis-Golgi network localization. A dimethylated arginine mark is found at arginine 171 and arginine 176. Asparagine 179 carries an N-linked (GlcNAc...) asparagine glycan. The chain crosses the membrane as a helical span at residues 186–206 (VLYFSIFSMFCLIGLATWQVF). The tract at residues 204-219 (QVFYLRRFFKAKKLIE) is interaction with COPG1. Over 207–219 (YLRRFFKAKKLIE) the chain is Cytoplasmic. Residues 207-219 (YLRRFFKAKKLIE) form an interaction with ARF1 and IL1B region. The short motif at 211-212 (FF) is the COPII vesicle coat-binding element. A COPI vesicle coat-binding motif is present at residues 211–219 (FFKAKKLIE).

Belongs to the EMP24/GP25L family. As to quaternary structure, predominantly dimeric and to a lesser extent monomeric in the ER. Monomer and dimer in ERGIC and cis-Golgi network. Forms homooligomer (via GOLD domain); the assembly is promoted by direct binding with leaderless cargos and may form a protein channel that facilitates cargo entry into the ERGIC. Forms heterooligomeric complexes with other members of the p24 family such as TMED2, TMED7 and TMED9. Interacts (via GOLD domain) with TMED2 (via GOLD domain); the complex is required for export of TMED10 from the ER to the cis-Golgi network; the complex is proposed to be involved in cis-Golgi network dynamics and / or biogenesis. Associates with the COPI vesicle coat subunits (coatomer). Tetramerization of the cytoplasmic domain at the Golgi membrane in vitro; the complex is proposed to interact with COPI coatomer and induce budding of the vesicles. Interacts with COPG1; the interaction involves TMED10 homodimer. Interacts with ARF1 (GDP-bound); the interaction probably involves a TMED10 oligomer. Interacts with SEC23A, SEC24B, SEC24C and SEC24D components of the coat protein complex II/COPII, indicative of an association of TMED10 with the COPII vesicle coat. Interacts with CD59. Interacts with MPPE1/PGAP5; the complex might recruit and sort GPI-anchored proteins to the ER-exit site, or the interaction might lead to recycling of PGAP5 between the ER and the Golgi. Interacts with F2LR1/PAR2. Interacts with KDELR2/ERD2; the interaction is disrupted by KDELR2 ligand. Found in a complex composed at least of SURF4, TMED2 and TMED10. Associates with the presenilin-dependent gamma-secretase complex. Interacts with STX17; the interaction is direct. Interacts with IL-1; the interaction is direct. Interacts with RAB21 (active GTP-bound form); the interaction is indirect and regulates TMED10 abundance and localization at the Golgi.

The protein localises to the endoplasmic reticulum membrane. Its subcellular location is the endoplasmic reticulum-Golgi intermediate compartment membrane. It localises to the golgi apparatus membrane. It is found in the golgi apparatus. The protein resides in the cis-Golgi network membrane. The protein localises to the trans-Golgi network membrane. Its subcellular location is the cytoplasmic vesicle. It localises to the secretory vesicle membrane. It is found in the cell membrane. The protein resides in the melanosome. Cargo receptor involved in protein vesicular trafficking and quality control in the endoplasmic reticulum (ER) and Golgi. The p24 protein family is a group of transmembrane proteins that bind coat protein complex I/COPI and coat protein complex II/COPII involved in vesicular trafficking between the membranes. Acts at the lumenal side for incorporation of secretory cargo molecules into transport vesicles and involved in vesicle coat formation at the cytoplasmic side. Mainly functions in the early secretory pathway and cycles between the ER, ER-Golgi intermediate compartment (ERGIC) and Golgi, mediating cargo transport through COPI and COPII-coated vesicles. In COPII vesicle-mediated anterograde transport, involved in the transport of GPI-anchored proteins by acting together with TMED2 as their cargo receptor; the function specifically implies SEC24C and SEC24D of the COPII vesicle coat and lipid raft-like microdomains of the ER. Recognizes GPI anchors structural remodeled in the ER by the GPI inositol-deacylase/PGAP1 and the metallophosphoesterase MPPE1/PGAP5. In COPI vesicle-mediated retrograde transport, involved in the biogenesis of COPI vesicles and vesicle coat recruitment. Involved in trafficking of amyloid beta A4 protein and soluble APP-beta release (independent from the modulation of gamma-secretase activity). Involved in the KDELR2-mediated retrograde transport of the toxin A subunit (CTX-A-K63)together with COPI and the COOH terminus of KDELR2. On Golgi membranes, acts as a primary receptor for ARF1-GDP, a GTP-binding protein involved in COPI-vesicle formation. Increases coatomer-dependent GTPase-activating activity of ARFGAP2 which mediates the hydrolysis of ARF1-bound GTP and therefore modulates protein trafficking from the Golgi apparatus. Involved in the exocytic trafficking of G protein-coupled receptors F2LR1/PAR2 (trypsin and tryspin-like enzyme receptor), OPRM1 (opioid receptor) and P2RY4 (UTD and UDP receptor) from the Golgi to the plasma membrane, thus contributing to receptor resensitization. In addition to its cargo receptor activity, may also act as a protein channel after oligomerization, facilitating the post-translational entry of leaderless cytoplasmic cargo into the ERGIC. Involved in the translocation into ERGIC, the vesicle entry and the secretion of leaderless cargos (lacking the secretion signal sequence), including the mature form of interleukin 1/IL-1 family members, the alpha-crystallin B chain HSPB5, the carbohydrate-binding proteins galectin-1/LGALS1 and galectin-3/LGALS3, the microtubule-associated protein Tau/MAPT, and the annexin A1/ANXA1; the translocation process is dependent on cargo protein unfolding and enhanced by chaperones HSP90AB1 and HSP90B1/GRP9. Could also associates with the presenilin-dependent gamma-secretase complex in order to regulate gamma-cleavages of the amyloid beta A4 protein to yield amyloid-beta 40/Abeta40. This Homo sapiens (Human) protein is Transmembrane emp24 domain-containing protein 10.